The chain runs to 465 residues: Glutamate--tRNA ligase 1 (465 aa).

The short motif at 8 to 18 (PSPTGLMHLGN) is the 'HIGH' region element. Positions 249–253 (PLSKR) match the 'KMSKS' region motif. K252 is a binding site for ATP.

This sequence belongs to the class-I aminoacyl-tRNA synthetase family. Glutamate--tRNA ligase type 1 subfamily. As to quaternary structure, monomer.

It is found in the cytoplasm. It carries out the reaction tRNA(Glu) + L-glutamate + ATP = L-glutamyl-tRNA(Glu) + AMP + diphosphate. Its function is as follows. Catalyzes the attachment of glutamate to tRNA(Glu) in a two-step reaction: glutamate is first activated by ATP to form Glu-AMP and then transferred to the acceptor end of tRNA(Glu). This Coxiella burnetii (strain CbuG_Q212) (Coxiella burnetii (strain Q212)) protein is Glutamate--tRNA ligase 1.